The primary structure comprises 1937 residues: Myosin-8 (1937 aa).

The region spanning 35-84 (DAKTSVFVAEPKESYVKSTIQSKEGGKVTVKTEGGATLTVREDQVFPMNP) is the Myosin N-terminal SH3-like domain. Phosphothreonine occurs at positions 66 and 71. Residues 88–781 (DKIEDMAMMT…LLGLLEEMRD (694 aa)) enclose the Myosin motor domain. Lysine 132 is modified (N6,N6,N6-trimethyllysine). 181–188 (GESGAGKT) contributes to the ATP binding site. The residue at position 389 (tyrosine 389) is a Phosphotyrosine. Serine 392 carries the phosphoserine modification. At threonine 419 the chain carries Phosphothreonine. Tyrosine 424 carries the phosphotyrosine modification. Serine 625 is modified (phosphoserine). Positions 658 to 680 (LNKLMTNLRSTHPHFVRCIIPNE) are actin-binding. The residue at position 756 (histidine 756) is a Pros-methylhistidine. The tract at residues 760 to 774 (KFGHTKVFFKAGLLG) is actin-binding. An IQ domain is found at 781–813 (DEKLAQIITRTQAVCRGFLMRVEYQKMLQRREA). The stretch at 842–1937 (LLKSAETEKE…REVHTKISAE (1096 aa)) forms a coiled coil. A phosphoserine mark is found at serine 1091 and serine 1095. Residues 1126 to 1146 (EAERASRAKAEKQRSDLSREL) are disordered. Over residues 1127 to 1146 (AERASRAKAEKQRSDLSREL) the composition is skewed to basic and acidic residues. Phosphoserine occurs at positions 1161, 1236, 1242, and 1260. Phosphothreonine is present on residues threonine 1264 and threonine 1285. Phosphoserine occurs at positions 1291, 1302, and 1305. Residue tyrosine 1463 is modified to Phosphotyrosine. A Phosphothreonine modification is found at threonine 1466. Serine 1473 carries the post-translational modification Phosphoserine. Tyrosine 1491 carries the post-translational modification Phosphotyrosine. Serine 1494 is subject to Phosphoserine. A Phosphothreonine modification is found at threonine 1500. Residue serine 1513 is modified to Phosphoserine. Position 1516 is a phosphothreonine (threonine 1516). Phosphoserine is present on residues serine 1553, serine 1573, serine 1602, serine 1713, and serine 1725. Position 1729 is a phosphothreonine (threonine 1729). Serine 1738 bears the Phosphoserine mark.

It belongs to the TRAFAC class myosin-kinesin ATPase superfamily. Myosin family. In terms of assembly, muscle myosin is a hexameric protein that consists of 2 heavy chain subunits (MHC), 2 alkali light chain subunits (MLC) and 2 regulatory light chain subunits (MLC-2).

The protein resides in the cytoplasm. The protein localises to the myofibril. In terms of biological role, muscle contraction. The protein is Myosin-8 (MYH8) of Homo sapiens (Human).